The primary structure comprises 284 residues: Agamous-like MADS-box protein AGL49 (284 aa).

Residues 1 to 20 (MAPRQKKPNKSDDDDGDLHR) are disordered. Residues 21–66 (KKQSFFKQRFPGFKKKASELSVLCGNSVGFICYGPDNDLHVWPQSQ) enclose the MADS-box domain.

As to quaternary structure, interacts with MEE14/CBP1.

It is found in the nucleus. Its function is as follows. Probable transcription factor that may function in the maintenance of the proper function of the central cell in pollen tube attraction. The chain is Agamous-like MADS-box protein AGL49 from Arabidopsis thaliana (Mouse-ear cress).